The sequence spans 380 residues: Oocyte-specific homeobox protein 4 (380 aa).

Disordered regions lie at residues 1–25, 43–95, 152–182, 234–303, and 339–380; these read MSKDSSLHPKYQMASNIPRETSFLV, VTPT…RKCR, KSSQLPRRIGSGPHYRPTSSSGGEVPDFAAS, PRQK…CQTP, and TRSK…SSAY. A compositionally biased stretch (polar residues) spans 43 to 53; the sequence is VTPTRPLQSSH. The segment covering 54 to 67 has biased composition (basic and acidic residues); that stretch reads SVHERDLHQKDSQE. Residues 94–153 constitute a DNA-binding region (homeobox); the sequence is CRKERTVYSKEQKCLLQEHFHQCQNPDLEQRKALALLIGVTEYKIQTWFKNRRAKECRKS. The span at 234 to 250 shows a compositional bias: basic and acidic residues; sequence PRQKCRELSREPGHLSS. Residues 260-271 show a composition bias toward low complexity; sequence SSPSPAAGAESS. Composition is skewed to polar residues over residues 278–302 and 351–380; these read LSLSPQLGPPSMTQNSESTFSMCQT and NTVQNLMHGQDSCEITESPKGTVSLPSSAY.

This sequence belongs to the paired homeobox family. Obox subfamily. Specifically expressed in early embryos.

It localises to the nucleus. Its function is as follows. Transcription factor required for zygotic genome activation (ZGA), a critical event in early embryonic development during which the developmental control passes from maternally provided mRNAs to the expression of the zygotic genome after fertilization. Cannot compensate for loss of other members of the Obox family, suggesting that its function differs from other Obox family members. May regulate expression of histone genes in embryonic stem cells. Also involved in completion of meiosis of oocytes during the meiosis-I/meiosis-II transition. Required to maintain the nuclear membrane of the germinal vesicle in oocytes. The protein is Oocyte-specific homeobox protein 4 of Mus musculus (Mouse).